The sequence spans 362 residues: Innexin inx1 (362 aa).

Over 1-28 (MYKLLGSLKSYLKWQDIQTDNAVFRLHN) the chain is Cytoplasmic. Residues 29–49 (SFTTVLLLTCSLIITATQYVG) traverse the membrane as a helical segment. The Extracellular portion of the chain corresponds to 50 to 110 (QPISCIVNGV…DAKKYYTYYQ (61 aa)). The helical transmembrane segment at 111–131 (WVCFVLFFQAMACYTPKFLWN) threads the bilayer. Residues 132 to 177 (KFEGGLMRMIVMGLNITICTREEKEAKRDALLDYLIKHVKRHKLYA) are Cytoplasmic-facing. The helical transmembrane segment at 178 to 198 (IRYWACEFLCCINIIVQMYLM) threads the bilayer. Residues 199-267 (NRFFDGEFLS…LPLNIVNEKT (69 aa)) lie on the Extracellular side of the membrane. The helical transmembrane segment at 268-288 (YVFIWFWFWILLVLLIGLIVF) threads the bilayer. Residues 289–362 (RGCIIFMPKF…VEPSKHDRAK (74 aa)) lie on the Cytoplasmic side of the membrane.

The protein belongs to the pannexin family. In terms of assembly, heterooligomer of Inx2 and ogre. In terms of tissue distribution, in ovary, expressed in follicle cells. Expressed around the periphery of the embryo during cellular blastoderm formation. Repeating epidermal pattern emerges from stage 11, high levels of expression detected along the borders of each segment from stage 13. At stage 13, expressed in the dorsal branch of the tracheal system. During stage 15, detected in a few cells at each of the branch points of the dorsal trunk and at low levels in cardioblasts. In embryos, also expressed in the salivary gland and the hindgut (at protein level). At stage 17, expressed in the dorsal side of the CNS. Expressed in the imaginal wing disk. Expressed in larval CNS and in tissues outside of the CNS. In pupae, expressed in the CNS and in primary, secondary and tertiary pigment cells of the retina.

It is found in the cell membrane. It localises to the cell junction. Its subcellular location is the gap junction. The protein localises to the basolateral cell membrane. Functionally, structural component of the gap junctions. Essential for generation and/or maintenance of postembryonic neuroblasts and normal development of optic lobe. This chain is Innexin inx1 (ogre), found in Drosophila melanogaster (Fruit fly).